The primary structure comprises 411 residues: Bifunctional protein GlmU (411 aa).

The interval 1–204 (MDAIILCAGK…IGKLHGVELN (204 aa)) is pyrophosphorylase. Residues 6–9 (LCAG), Q74, and G79 each bind UTP. 4 residues coordinate N-acetyl-alpha-D-glucosamine 1-phosphate: T80, G130, N142, and N158. The interval 205-224 (GYWNDIGHPWDVLSANSHFL) is linker. Residues 225–411 (NKIISKISGK…DELVITKKRN (187 aa)) are N-acetyltransferase. H308 acts as the Proton acceptor in catalysis. Acetyl-CoA contacts are provided by A384 and K401.

In the N-terminal section; belongs to the N-acetylglucosamine-1-phosphate uridyltransferase family. This sequence in the C-terminal section; belongs to the transferase hexapeptide repeat family.

It catalyses the reaction N-acetyl-alpha-D-glucosamine 1-phosphate + UTP + H(+) = UDP-N-acetyl-alpha-D-glucosamine + diphosphate. The enzyme catalyses alpha-D-glucosamine 1-phosphate + acetyl-CoA = N-acetyl-alpha-D-glucosamine 1-phosphate + CoA + H(+). The protein operates within nucleotide-sugar biosynthesis; UDP-N-acetyl-alpha-D-glucosamine biosynthesis; N-acetyl-alpha-D-glucosamine 1-phosphate from alpha-D-glucosamine 6-phosphate (route II): step 2/2. It participates in nucleotide-sugar biosynthesis; UDP-N-acetyl-alpha-D-glucosamine biosynthesis; UDP-N-acetyl-alpha-D-glucosamine from N-acetyl-alpha-D-glucosamine 1-phosphate: step 1/1. Functionally, catalyzes the last two sequential reactions in the de novo biosynthetic pathway for UDP-N-acetyl-glucosamine (UDP-GlcNAc). Responsible for the acetylation of GlcN-1-P to GlcNAc-1-P, and for the uridyl transfer from UTP to GlcNAc-1-P, to produce UDP-GlcNAc and pyrophosphate. The protein is Bifunctional protein GlmU of Methanococcus maripaludis (strain C5 / ATCC BAA-1333).